The following is a 341-amino-acid chain: MYTLARQLLFKLSPETSHDLSLDLIGAGGRLGLNGMLCKQPAALPVSVMGLNFANPVGLAAGLDKNGAAIDGFAQLGFGFVEIGTVTPRPQPGNPKPRLFRLPEATAIINRMGFNNLGVDHLLERVRAARYNGVLGINIGKNFDTPVERAVDDYLICLDKVYTAASYITVNVSSPNTPGLRSLQFGDSLKQLLDALAERREQLAVTHGKRVPLAIKIAPDMSDEETALVAAALMASGMDAVIATNTTLGREGVEALPHGGEAGGLSGAPVLAKSTHIVKVLAGELGGKLPIIAAGGITEGRHAAEKIAAGASLVQIYSGFIYKGPALIREAVDAIAAMPRV.

Residues 61-65 (AGLDK) and T85 contribute to the FMN site. K65 contacts substrate. Position 110-114 (110-114 (NRMGF)) interacts with substrate. FMN contacts are provided by N138 and N171. Position 171 (N171) interacts with substrate. S174 serves as the catalytic Nucleophile. N176 lines the substrate pocket. The FMN site is built by K216 and T244. 245–246 (NT) lines the substrate pocket. Residues G267, G296, and 317–318 (YS) contribute to the FMN site.

Belongs to the dihydroorotate dehydrogenase family. Type 2 subfamily. In terms of assembly, monomer. Requires FMN as cofactor.

Its subcellular location is the cell membrane. It carries out the reaction (S)-dihydroorotate + a quinone = orotate + a quinol. It functions in the pathway pyrimidine metabolism; UMP biosynthesis via de novo pathway; orotate from (S)-dihydroorotate (quinone route): step 1/1. Functionally, catalyzes the conversion of dihydroorotate to orotate with quinone as electron acceptor. This Pseudomonas putida (strain GB-1) protein is Dihydroorotate dehydrogenase (quinone).